Consider the following 400-residue polypeptide: Acetate kinase (400 aa).

A Mg(2+)-binding site is contributed by Asn-10. Lys-17 contacts ATP. Residue Arg-91 coordinates substrate. Asp-150 (proton donor/acceptor) is an active-site residue. Residues 210 to 214 (HLGNG), 285 to 287 (DCR), and 333 to 337 (GIGEN) contribute to the ATP site. Glu-387 serves as a coordination point for Mg(2+).

This sequence belongs to the acetokinase family. In terms of assembly, homodimer. Mg(2+) is required as a cofactor. Mn(2+) serves as cofactor.

The protein resides in the cytoplasm. It carries out the reaction acetate + ATP = acetyl phosphate + ADP. The protein operates within metabolic intermediate biosynthesis; acetyl-CoA biosynthesis; acetyl-CoA from acetate: step 1/2. Catalyzes the formation of acetyl phosphate from acetate and ATP. Can also catalyze the reverse reaction. This Cronobacter sakazakii (strain ATCC BAA-894) (Enterobacter sakazakii) protein is Acetate kinase.